The chain runs to 85 residues: Defensin-like protein 112 (85 aa).

A signal peptide spans 1 to 24; the sequence is MAISKKMLTTFVLTILLAVSFVHC. 4 cysteine pairs are disulfide-bonded: Cys-40–Cys-80, Cys-46–Cys-71, Cys-56–Cys-78, and Cys-60–Cys-79.

It belongs to the DEFL family.

It localises to the secreted. This is Defensin-like protein 112 from Arabidopsis thaliana (Mouse-ear cress).